The chain runs to 222 residues: Vespryn (222 aa).

Positions methionine 1–glutamine 44 are cleaved as a signal peptide. Positions glutamate 45 to alanine 52 are excised as a propeptide. A B30.2/SPRY domain is found at serine 53–leucine 159. A propeptide spanning residues arginine 160–leucine 222 is cleaved from the precursor. The N-linked (GlcNAc...) asparagine glycan is linked to asparagine 195.

The protein belongs to the ohanin/vespryn family. Expressed by the venom gland.

It is found in the secreted. In terms of biological role, neurotoxin that produces dose-dependent hypolocomotion and hyperalgesia in mice. May directly act on the central nervous system, as it is 6500-fold more potent when administered intracerebroventricularly than intraperitoneal. This Crotalus adamanteus (Eastern diamondback rattlesnake) protein is Vespryn.